A 210-amino-acid polypeptide reads, in one-letter code: Shikimate kinase (210 aa).

34-39 is a binding site for ATP; the sequence is GAGKSV. S38 is a binding site for Mg(2+). Residues D56, R80, and G102 each contribute to the substrate site. R140 is a binding site for ATP. R159 contributes to the substrate binding site.

Belongs to the shikimate kinase family. As to quaternary structure, monomer. Requires Mg(2+) as cofactor.

It is found in the cytoplasm. The catalysed reaction is shikimate + ATP = 3-phosphoshikimate + ADP + H(+). It participates in metabolic intermediate biosynthesis; chorismate biosynthesis; chorismate from D-erythrose 4-phosphate and phosphoenolpyruvate: step 5/7. In terms of biological role, catalyzes the specific phosphorylation of the 3-hydroxyl group of shikimic acid using ATP as a cosubstrate. The protein is Shikimate kinase of Bartonella quintana (strain Toulouse) (Rochalimaea quintana).